Reading from the N-terminus, the 254-residue chain is MLNVGIYGGSGRVGSLLIKNLQHDEVARVSVVHVLKGIELAVPGATVTNDIDTLIQKSDVIIDFTLPEGTESLLERLLEHPKPLVSGTTGLNKHQQNLMQTLAQKTPVLYATNMSLGIALLKRLVAVTSEKLRDFDIEIVEMHHRYKKDAPSGTALTLAEFAAKARGLDLEKVRVSGRDGNIGERSKEEIGVFALRGGDIVGRHTVGFYNDGEYIELNHTATSRDTFAKGAIKAAKWLVSQEPGFYTIDDCLGL.

Residues 8-13, 87-89, and 111-114 contribute to the NAD(+) site; these read GGSGRV, GTT, and ATNM. H143 serves as the catalytic Proton donor/acceptor. (S)-2,3,4,5-tetrahydrodipicolinate is bound at residue H144. The Proton donor role is filled by K147. Residue 153–154 participates in (S)-2,3,4,5-tetrahydrodipicolinate binding; the sequence is GT.

It belongs to the DapB family.

Its subcellular location is the cytoplasm. The enzyme catalyses (S)-2,3,4,5-tetrahydrodipicolinate + NAD(+) + H2O = (2S,4S)-4-hydroxy-2,3,4,5-tetrahydrodipicolinate + NADH + H(+). It catalyses the reaction (S)-2,3,4,5-tetrahydrodipicolinate + NADP(+) + H2O = (2S,4S)-4-hydroxy-2,3,4,5-tetrahydrodipicolinate + NADPH + H(+). The protein operates within amino-acid biosynthesis; L-lysine biosynthesis via DAP pathway; (S)-tetrahydrodipicolinate from L-aspartate: step 4/4. Functionally, catalyzes the conversion of 4-hydroxy-tetrahydrodipicolinate (HTPA) to tetrahydrodipicolinate. The polypeptide is 4-hydroxy-tetrahydrodipicolinate reductase (Nitratiruptor sp. (strain SB155-2)).